The sequence spans 428 residues: MANVTVVGAQWGDEGKGKIVDWLSNRADVVVRFQGGHNAGHTLVVDGKVYKLALLPSGVVQGKLSVIGNGVVVDPWHLLTEIDKIAEQGVAITPELLVLADNACLILPLHKDLDQAREAASTQKIGTTGRGIGPAYEDKVGRRAIRVADLADPEALKPKIERLLAHHGALRRGLGLPEADGAALFDQLMEVAPRVLAYAQPAWRLLDKAYKDGRKILFEGAQGALLDVDHGTYPFVTSSNTVAGQASAGSGMGPSATGYVLGIVKAYTTRVGEGPFAAELDDEVGKHLSTVGREVGVNTGRARRCGWFDAVLVRQSVAINGIHGVALTKLDVLDGLKTLKICVGYRIGDKVVDYLPAGMRDQRAAEPIYEEMEGWSESTAGARSFKDLNANAVKYVRRVEELIGAPVALLSTSPERDDTILMRDPFQG.

GTP-binding positions include 12–18 and 40–42; these read GDEGKGK and GHT. Asp-13 functions as the Proton acceptor in the catalytic mechanism. Mg(2+) contacts are provided by Asp-13 and Gly-40. Residues 13-16, 38-41, Thr-128, Arg-142, Gln-222, Thr-237, and Arg-301 each bind IMP; these read DEGK and NAGH. Catalysis depends on His-41, which acts as the Proton donor. 297–303 provides a ligand contact to substrate; that stretch reads VNTGRAR. Residues Arg-303, 329–331, and 411–413 contribute to the GTP site; these read KLD and STS.

Belongs to the adenylosuccinate synthetase family. As to quaternary structure, homodimer. Mg(2+) is required as a cofactor.

The protein localises to the cytoplasm. It catalyses the reaction IMP + L-aspartate + GTP = N(6)-(1,2-dicarboxyethyl)-AMP + GDP + phosphate + 2 H(+). It participates in purine metabolism; AMP biosynthesis via de novo pathway; AMP from IMP: step 1/2. Plays an important role in the de novo pathway of purine nucleotide biosynthesis. Catalyzes the first committed step in the biosynthesis of AMP from IMP. This Caulobacter sp. (strain K31) protein is Adenylosuccinate synthetase.